Consider the following 334-residue polypeptide: Protein-methionine-sulfoxide reductase catalytic subunit MsrP (334 aa).

Positions 1–44 (MKKIRPLTEADVTAESAFFMQRRQVLKALGISAAALSLPSTAQA) form a signal peptide, tat-type signal. Mo-molybdopterin contacts are provided by residues asparagine 88, 91–92 (YE), cysteine 146, threonine 181, asparagine 233, arginine 238, and 249–251 (GIK).

It belongs to the MsrP family. In terms of assembly, heterodimer of a catalytic subunit (MsrP) and a heme-binding subunit (MsrQ). It depends on Mo-molybdopterin as a cofactor. In terms of processing, predicted to be exported by the Tat system. The position of the signal peptide cleavage has not been experimentally proven.

The protein localises to the periplasm. It carries out the reaction L-methionyl-[protein] + a quinone + H2O = L-methionyl-(S)-S-oxide-[protein] + a quinol. The catalysed reaction is L-methionyl-[protein] + a quinone + H2O = L-methionyl-(R)-S-oxide-[protein] + a quinol. Functionally, part of the MsrPQ system that repairs oxidized periplasmic proteins containing methionine sulfoxide residues (Met-O), using respiratory chain electrons. Thus protects these proteins from oxidative-stress damage caused by reactive species of oxygen and chlorine generated by the host defense mechanisms. MsrPQ is essential for the maintenance of envelope integrity under bleach stress, rescuing a wide series of structurally unrelated periplasmic proteins from methionine oxidation, including the primary periplasmic chaperone SurA and the lipoprotein Pal. The catalytic subunit MsrP is non-stereospecific, being able to reduce both (R-) and (S-) diastereoisomers of methionine sulfoxide. The sequence is that of Protein-methionine-sulfoxide reductase catalytic subunit MsrP from Salmonella arizonae (strain ATCC BAA-731 / CDC346-86 / RSK2980).